A 143-amino-acid polypeptide reads, in one-letter code: Transcriptional regulator MraZ (143 aa).

SpoVT-AbrB domains lie at 5–47 (EYHH…PIEE) and 76–119 (AMES…SAER).

It belongs to the MraZ family. In terms of assembly, forms oligomers.

The protein localises to the cytoplasm. The protein resides in the nucleoid. The protein is Transcriptional regulator MraZ of Lactobacillus johnsonii (strain CNCM I-12250 / La1 / NCC 533).